The primary structure comprises 416 residues: Serine hydroxymethyltransferase (416 aa).

Residues Leu121 and 125 to 127 (GHL) contribute to the (6S)-5,6,7,8-tetrahydrofolate site. Lys229 carries the N6-(pyridoxal phosphate)lysine modification.

This sequence belongs to the SHMT family. As to quaternary structure, homodimer. The cofactor is pyridoxal 5'-phosphate.

The protein localises to the cytoplasm. It catalyses the reaction (6R)-5,10-methylene-5,6,7,8-tetrahydrofolate + glycine + H2O = (6S)-5,6,7,8-tetrahydrofolate + L-serine. The protein operates within one-carbon metabolism; tetrahydrofolate interconversion. It participates in amino-acid biosynthesis; glycine biosynthesis; glycine from L-serine: step 1/1. Catalyzes the reversible interconversion of serine and glycine with tetrahydrofolate (THF) serving as the one-carbon carrier. This reaction serves as the major source of one-carbon groups required for the biosynthesis of purines, thymidylate, methionine, and other important biomolecules. Also exhibits THF-independent aldolase activity toward beta-hydroxyamino acids, producing glycine and aldehydes, via a retro-aldol mechanism. In Neisseria meningitidis serogroup A / serotype 4A (strain DSM 15465 / Z2491), this protein is Serine hydroxymethyltransferase.